The primary structure comprises 312 residues: Ribosomal RNA small subunit methyltransferase H (312 aa).

S-adenosyl-L-methionine-binding positions include 35–37, D55, F79, D100, and Q107; that span reads GGH.

This sequence belongs to the methyltransferase superfamily. RsmH family.

The protein resides in the cytoplasm. It carries out the reaction cytidine(1402) in 16S rRNA + S-adenosyl-L-methionine = N(4)-methylcytidine(1402) in 16S rRNA + S-adenosyl-L-homocysteine + H(+). In terms of biological role, specifically methylates the N4 position of cytidine in position 1402 (C1402) of 16S rRNA. The protein is Ribosomal RNA small subunit methyltransferase H of Azoarcus sp. (strain BH72).